The primary structure comprises 785 residues: Copal-8-ol diphosphate hydratase TPSSA3, chloroplastic (785 aa).

Residue Arg-240 coordinates substrate. Asp-372 and Asp-374 together coordinate Mg(2+). A DXDD motif motif is present at residues 372 to 375; sequence DIDD. Position 459 (Arg-459) interacts with substrate.

Belongs to the terpene synthase family. It depends on Mg(2+) as a cofactor.

The protein localises to the plastid. It localises to the chloroplast. The catalysed reaction is (2E,6E,10E)-geranylgeranyl diphosphate + H2O = 8-hydroxycopalyl diphosphate. Its pathway is secondary metabolite biosynthesis; terpenoid biosynthesis. In terms of biological role, involved in the biosynthesis of labdane-type diterpenoid including sclareol, a diterpene-diol that is used as fragrance and flavoring, and has anticancer effects (able to kill leukemic and colon cancer cells by apoptosis). Sclareol can also be used as synthesis precursor of ambergris substitution fragance products such as ambrox. Terpene synthase that produces 8-hydroxycopalyl diphosphate from geranylgeranyl diphosphate (GGPP). This is Copal-8-ol diphosphate hydratase TPSSA3, chloroplastic from Salvia sclarea (Clary sage).